A 2498-amino-acid polypeptide reads, in one-letter code: PKS-NRPS hybrid synthetase acdB (2498 aa).

The adenylation (A) domain stretch occupies residues 34–427 (FEQAAHAHFD…GRADSQVKIR (394 aa)). The 76-residue stretch at 531–606 (QPATELERDI…SLAGYLMDMD (76 aa)) folds into the Carrier 1 domain. S566 is subject to O-(pantetheine 4'-phosphoryl)serine. One can recognise a Ketosynthase family 3 (KS3) domain in the interval 627-1058 (SDDIAVVSMA…GTNAHVIVEE (432 aa)). Catalysis depends on for beta-ketoacyl synthase activity residues C802, H938, and H979. Positions 1165–1485 (LFAGQGSQQL…EILARLHVQH (321 aa)) are malonyl-CoA:ACP transacylase (MAT) domain. The interval 1739 to 1917 (GAVLITGGLS…PAVCVAYGPL (179 aa)) is ketoreductase (KR) domain. One can recognise a Carrier 2 domain in the interval 2017-2092 (EILLRTIQEA…ELSRYLLPQL (76 aa)). S2052 carries the post-translational modification O-(pantetheine 4'-phosphoryl)serine. The interval 2149–2378 (VTGATEFVGA…FPVDYVCRTI (230 aa)) is thioester reductase (TE) domain.

This sequence in the C-terminal section; belongs to the NRP synthetase family. It depends on pantetheine 4'-phosphate as a cofactor.

The protein operates within secondary metabolite biosynthesis. PKS-NRPS hybrid synthetase; part of the gene cluster that mediates the biosynthesis of aspcandine, a pyrrolobenzazepine alkaloid. Initially, the indoleamine 2,3-dioxygenase acdA accepts L-tryptophan and performs the oxidative opening of the indole ring to yield N'-formyl-L-kynurenine, which undergoes the spontaneous deformylation reaction to provide L-kynurenine. The kynurenine 3-monooxygenase acdD then hydroxylates L-kynurenine to afford 3-hydroxy-L-kynurenine. 3-hydroxy-L-kynurenine is activated by the A domain of the NRPS-PKS acdB and subsequently loaded onto the enzyme. The KS domain conducts the decarboxylative condensation of the 3-hydroxy-L-kynurenyl and malonyl moieties, and subsequent nucleophilic attacks by the two amino groups would occur nonenzymatically at two distinct positions, achieving the chain release and the construction of the tricyclic system. Finally, a dehydration reaction completes the biosynthesis to yield aspcandine. This is PKS-NRPS hybrid synthetase acdB from Aspergillus candidus.